The chain runs to 1252 residues: DNA-directed RNA polymerase subunit beta (1252 aa).

The protein belongs to the RNA polymerase beta chain family. As to quaternary structure, the RNAP catalytic core consists of 2 alpha, 1 beta, 1 beta' and 1 omega subunit. When a sigma factor is associated with the core the holoenzyme is formed, which can initiate transcription.

The enzyme catalyses RNA(n) + a ribonucleoside 5'-triphosphate = RNA(n+1) + diphosphate. In terms of biological role, DNA-dependent RNA polymerase catalyzes the transcription of DNA into RNA using the four ribonucleoside triphosphates as substrates. This is DNA-directed RNA polymerase subunit beta from Chlamydia caviae (strain ATCC VR-813 / DSM 19441 / 03DC25 / GPIC) (Chlamydophila caviae).